Consider the following 233-residue polypeptide: Small ribosomal subunit protein uS2 (233 aa).

This sequence belongs to the universal ribosomal protein uS2 family.

The protein is Small ribosomal subunit protein uS2 of Bacillus anthracis.